The chain runs to 241 residues: Viral CASP8 and FADD-like apoptosis regulator (241 aa).

DED domains lie at 8 to 78 (PSLP…SRFG) and 95 to 175 (RYRK…QLVE). Residues 212 to 241 (CMPVQESSDSPELLRTPVQESSSDSPEQTT) are disordered. Residues 229–241 (VQESSSDSPEQTT) are compositionally biased toward polar residues.

In terms of assembly, associates with the death-inducing signaling complex (DISC) formed by TNFRSF6/FAS, FADD and CASP8. Interacts with FADD. Interacts with host TRAF2. Interacts with host NEMO/IKBKG (via N-terminus). Interacts with host SH3BP4; this interaction plays an important in the suppression of host autophagy.

The protein localises to the host cytoplasm. Its subcellular location is the host nucleus. Inhibits TNFRSF1A, TNFRSF6/FAS and TNFRSF12 induced apoptosis. Directs the degradation of host NFKBIB but not NFKBIA. Also suppresses host NF-kappa-B activation by interacting with and preventing ubiquitination of host NEMO/IKBKG, the NF-kappa-B essential modulator subunit of the IKK complex. Interferes with host CASP8/caspase-8 recruitment and activation at the death-inducing signaling complex (DISC). May lead to higher virus production and contribute to virus persistence and oncogenicity. Also participates in the inhibition of host autophagy by interacting with host SH3BP4. The protein is Viral CASP8 and FADD-like apoptosis regulator of Homo sapiens (Human).